The sequence spans 70 residues: MPLPKIDDWRELSDEEISEQILATKKELFELRLQKATRQLEKPHLVRHAKHKLAQLMLLESQRTAAAKEK.

It belongs to the universal ribosomal protein uL29 family.

The protein is Large ribosomal subunit protein uL29 of Gloeobacter violaceus (strain ATCC 29082 / PCC 7421).